The chain runs to 199 residues: Probable GTP-binding protein EngB (199 aa).

Residues 28–199 (DIPEIALAGR…QAWDAILEQI (172 aa)) form the EngB-type G domain. GTP is bound by residues 36–43 (GRSNVGKS), 63–67 (GKTQL), 81–84 (DVPG), 148–151 (TKAD), and 180–182 (FSS). Mg(2+) is bound by residues Ser43 and Thr65.

It belongs to the TRAFAC class TrmE-Era-EngA-EngB-Septin-like GTPase superfamily. EngB GTPase family. It depends on Mg(2+) as a cofactor.

Necessary for normal cell division and for the maintenance of normal septation. This is Probable GTP-binding protein EngB from Streptococcus uberis (strain ATCC BAA-854 / 0140J).